We begin with the raw amino-acid sequence, 1118 residues long: uncharacterized protein (1118 aa).

Disordered stretches follow at residues 1–69 (MESG…NGED), 1044–1071 (PKSV…EKID), and 1090–1118 (IRPT…SFEL). Acidic residues predominate over residues 13 to 34 (DMVEEDNDEDSFEEPACEDSFD). Positions 35–60 (SQEASSKANEPQNDSFDEPIQSSVSK) are enriched in polar residues. The segment covering 1107 to 1118 (EDSDDLEDSFEL) has biased composition (acidic residues).

This is an uncharacterized protein from Caenorhabditis elegans.